The primary structure comprises 477 residues: tRNA-2-methylthio-N(6)-dimethylallyladenosine synthase (477 aa).

In terms of domain architecture, MTTase N-terminal spans 13–130 (GGLFIKTYGC…LPAMIEEALA (118 aa)). Residues C22, C59, C93, C178, C182, and C185 each coordinate [4Fe-4S] cluster. In terms of domain architecture, Radical SAM core spans 164-396 (ESNGVSAFVS…QAMLNEQTAA (233 aa)). In terms of domain architecture, TRAM spans 399 to 462 (EGMVGTTQRV…ANSLKGKLVA (64 aa)).

The protein belongs to the methylthiotransferase family. MiaB subfamily. In terms of assembly, monomer. The cofactor is [4Fe-4S] cluster.

It is found in the cytoplasm. The enzyme catalyses N(6)-dimethylallyladenosine(37) in tRNA + (sulfur carrier)-SH + AH2 + 2 S-adenosyl-L-methionine = 2-methylsulfanyl-N(6)-dimethylallyladenosine(37) in tRNA + (sulfur carrier)-H + 5'-deoxyadenosine + L-methionine + A + S-adenosyl-L-homocysteine + 2 H(+). Its function is as follows. Catalyzes the methylthiolation of N6-(dimethylallyl)adenosine (i(6)A), leading to the formation of 2-methylthio-N6-(dimethylallyl)adenosine (ms(2)i(6)A) at position 37 in tRNAs that read codons beginning with uridine. This chain is tRNA-2-methylthio-N(6)-dimethylallyladenosine synthase, found in Hydrogenovibrio crunogenus (strain DSM 25203 / XCL-2) (Thiomicrospira crunogena).